We begin with the raw amino-acid sequence, 746 residues long: Protein O-mannosyl-transferase 1 (746 aa).

The next 7 membrane-spanning stretches (helical) occupy residues 30–50 (PLVVTVDINLNLVALTGLGLL), 90–110 (FGHMLLALGGWLGGFDGNFLW), 121–141 (VPIWSLRLLPALAGALSVPMA), 144–164 (IVLELHFSHGAAIGAALLMLI), 176–196 (LLESILIFFNLLAVLSYLKFF), 228–248 (MGIFTYLLVLGIAAVHAWNLI), and 266–286 (IVALLVVPVFLYLLFFYVHLM). 3 consecutive MIR domains span residues 318–381 (PLEV…VKDP), 392–449 (PRPV…LDIV), and 453–513 (SNRD…VEEH). Residues Asn435, Asn471, and Asn539 are each glycosylated (N-linked (GlcNAc...) asparagine). The next 3 helical transmembrane spans lie at 597–617 (IVIWTSASLATVVYTLLFFWY), 636–656 (WVLAGALCTGGWALNYLPFFL), and 660–680 (VLFLYHYLPALTFQILLLPIV).

This sequence belongs to the glycosyltransferase 39 family.

The protein resides in the endoplasmic reticulum membrane. The enzyme catalyses a di-trans,poly-cis-dolichyl beta-D-mannosyl phosphate + L-seryl-[protein] = 3-O-(alpha-D-mannosyl)-L-seryl-[protein] + a di-trans,poly-cis-dolichyl phosphate + H(+). The catalysed reaction is a di-trans,poly-cis-dolichyl beta-D-mannosyl phosphate + L-threonyl-[protein] = 3-O-(alpha-D-mannosyl)-L-threonyl-[protein] + a di-trans,poly-cis-dolichyl phosphate + H(+). The protein operates within protein modification; protein glycosylation. In terms of biological role, transfers mannosyl residues to the hydroxyl group of serine or threonine residues. Coexpression of both POMT1 and POMT2 is necessary for enzyme activity, expression of either POMT1 or POMT2 alone is insufficient. Essentially dedicated to O-mannosylation of alpha-DAG1 and few other proteins but not of cadherins and protocaherins. This Mus musculus (Mouse) protein is Protein O-mannosyl-transferase 1 (Pomt1).